The primary structure comprises 352 residues: Phenylalanine--tRNA ligase alpha subunit (352 aa).

Glu-258 contributes to the Mg(2+) binding site.

Belongs to the class-II aminoacyl-tRNA synthetase family. Phe-tRNA synthetase alpha subunit type 1 subfamily. In terms of assembly, tetramer of two alpha and two beta subunits. Mg(2+) is required as a cofactor.

The protein localises to the cytoplasm. It carries out the reaction tRNA(Phe) + L-phenylalanine + ATP = L-phenylalanyl-tRNA(Phe) + AMP + diphosphate + H(+). The sequence is that of Phenylalanine--tRNA ligase alpha subunit from Staphylococcus aureus (strain NCTC 8325 / PS 47).